A 537-amino-acid chain; its full sequence is MVRLKTSLWVLLLALVSIQLNGSFGSESSKVAYVTLLYGDEFLLGVRVLGKSIRDTGSTKDMVALVSDGVSDYSKKLLKADGWKVEKISLLANPNQVHPTRFWGVYTKLKIFNMTDYKKVVYLDADTIVVKNIEDLFKCSKFCANLKHSERLNSGVMVVEPSEALFNDMMRKVKTLSSYTGGDQGFLNSYYPDFPNARVFDPSVTPEVLKTRPVPAMERLSTLYNADVGLYMLANKWMVDDSKLHVIHYTLGPLKPWDWWTAWLVKPVDAWHSIRVKLEETLPGTGGGSNQHDELVVKFLFLLPLCALLFCIYRSIQGREGSLCWSSFSNQIRYLYYKVRSNGTLGYGGVSTMSPSYQPHSGNAQSKVPQHLGAVSVVVCFTAVLLSLGISFAIVPRQIMPWTGLVLVYEWTFTIFFLLFGVFLLFVHQHGKRIAIQSESSSLDDSAKVHQRAGGSCDVTTLYYGLGMAFLAIAAVSLPYILGITALFTRLGLMVGLAIILAAFMTYASEHLAVRWFLKGLEDRRDTTRSNSLCFLC.

A helical membrane pass occupies residues 6–26 (TSLWVLLLALVSIQLNGSFGS). Mn(2+)-binding residues include Asp-124 and Asp-126. Substrate is bound by residues 124-126 (DAD), 153-155 (NSG), 180-184 (TGGDQ), and 248-255 (HYTLGPLK). Residue His-248 coordinates Mn(2+). Transmembrane regions (helical) follow at residues 293 to 313 (DELVVKFLFLLPLCALLFCIY), 375 to 395 (VSVVVCFTAVLLSLGISFAIV), 406 to 426 (VLVYEWTFTIFFLLFGVFLLF), 468 to 488 (MAFLAIAAVSLPYILGITALF), and 494 to 514 (MVGLAIILAAFMTYASEHLAV).

Belongs to the glycosyltransferase 8 family. Glycogenin subfamily. The cofactor is Mn(2+). As to expression, expressed in seedlings, roots, leaves, stems and siliques.

The protein localises to the golgi apparatus membrane. The catalysed reaction is glucuronate acceptor + UDP-alpha-D-glucuronate = acceptor beta-D-glucuronoside + UDP + H(+). It catalyses the reaction a 1D-myo-inositol-1-phospho-N-[(R)-2-hydroxy-very-long-chain fatty acyl]-(R)-4-hydroxysphingoid base + UDP-alpha-D-glucuronate = an alpha-D-glucuronosyl-(1&lt;-&gt;6)-1D-myo-inositol-1-phospho-N-[(R)-2-hydroxy-very-long-chain fatty acyl]-(R)-4-hydroxysphingoid base + UDP + H(+). Its pathway is sphingolipid metabolism. Functionally, mediates the transfer of glucuronic acid (GlcA) from UDP-GlcA to glycosyl inositol phosphorylceramides (GIPCs). The formation of GIPCs sphingolipids is essential for pollen function, plant growth and defense. Required for global fitness. The protein is Inositol phosphorylceramide glucuronosyltransferase 1 of Arabidopsis thaliana (Mouse-ear cress).